A 339-amino-acid polypeptide reads, in one-letter code: Glycerol-3-phosphate dehydrogenase [NAD(P)+] (339 aa).

Positions 14, 15, 35, and 109 each coordinate NADPH. Sn-glycerol 3-phosphate is bound by residues lysine 109, glycine 138, and threonine 140. Alanine 142 is an NADPH binding site. Positions 194, 247, 257, 258, and 259 each coordinate sn-glycerol 3-phosphate. Lysine 194 serves as the catalytic Proton acceptor. Arginine 258 is a binding site for NADPH. NADPH contacts are provided by valine 282 and glutamate 284.

It belongs to the NAD-dependent glycerol-3-phosphate dehydrogenase family.

The protein resides in the cytoplasm. It carries out the reaction sn-glycerol 3-phosphate + NAD(+) = dihydroxyacetone phosphate + NADH + H(+). It catalyses the reaction sn-glycerol 3-phosphate + NADP(+) = dihydroxyacetone phosphate + NADPH + H(+). Its pathway is membrane lipid metabolism; glycerophospholipid metabolism. Functionally, catalyzes the reduction of the glycolytic intermediate dihydroxyacetone phosphate (DHAP) to sn-glycerol 3-phosphate (G3P), the key precursor for phospholipid synthesis. The sequence is that of Glycerol-3-phosphate dehydrogenase [NAD(P)+] from Shewanella amazonensis (strain ATCC BAA-1098 / SB2B).